We begin with the raw amino-acid sequence, 268 residues long: Activator of basal transcription 1 (268 aa).

Residues 6–38 (KLVEEQKAAMEEEKEVNAEAAEELEEAEEASCN) are a coiled coil. An RRM domain is found at 47–144 (GIVYLGHVPP…RKRSPFRYDL (98 aa)). A coiled-coil region spans residues 163 to 193 (AFERQVRRQRLRAEVAQAKRETDFYLRNVEQ). Positions 200-242 (ADGDATRPNSSWTFTQRPTEQELRAQKGARPGGRERARLATVQ) are disordered. The span at 206–217 (RPNSSWTFTQRP) shows a compositional bias: polar residues.

The protein belongs to the ESF2/ABP1 family. Interacts with IGHMBP2. Interacts with ESF1/ABTAP.

The protein localises to the nucleus. It is found in the nucleolus. In terms of biological role, may be a novel TATA-binding protein (TBP) which can function as a basal transcription activator. Can act as a regulator of basal transcription for class II genes. The chain is Activator of basal transcription 1 (Abt1) from Rattus norvegicus (Rat).